The primary structure comprises 376 residues: Putative F-box protein At1g53370 (376 aa).

Positions 22 to 71 constitute an F-box domain; that stretch reads RNYIDSIPVDLLIDILSRFPPKSIARFYCVSKLWESILRGPDFTELYLTK.

This Arabidopsis thaliana (Mouse-ear cress) protein is Putative F-box protein At1g53370.